Consider the following 342-residue polypeptide: Isopentenyl-diphosphate delta-isomerase (342 aa).

11–12 (RK) is a binding site for substrate. Residues Ser68, 69-71 (SMT), Ser99, and Asn127 each bind FMN. 99-101 (SMR) lines the substrate pocket. Gln162 serves as a coordination point for substrate. Glu163 provides a ligand contact to Mg(2+). Residues Lys194, Thr224, 274–276 (GFK), and 295–296 (AG) contribute to the FMN site.

The protein belongs to the IPP isomerase type 2 family. In terms of assembly, homooctamer. Dimer of tetramers. FMN is required as a cofactor. It depends on NADPH as a cofactor. Mg(2+) serves as cofactor.

The protein resides in the cytoplasm. It catalyses the reaction isopentenyl diphosphate = dimethylallyl diphosphate. Functionally, involved in the biosynthesis of isoprenoids. Catalyzes the 1,3-allylic rearrangement of the homoallylic substrate isopentenyl (IPP) to its allylic isomer, dimethylallyl diphosphate (DMAPP). This is Isopentenyl-diphosphate delta-isomerase from Rickettsia conorii (strain ATCC VR-613 / Malish 7).